Here is a 397-residue protein sequence, read N- to C-terminus: Tryptophan synthase beta chain (397 aa).

Lys87 carries the post-translational modification N6-(pyridoxal phosphate)lysine.

It belongs to the TrpB family. As to quaternary structure, tetramer of two alpha and two beta chains. It depends on pyridoxal 5'-phosphate as a cofactor.

The enzyme catalyses (1S,2R)-1-C-(indol-3-yl)glycerol 3-phosphate + L-serine = D-glyceraldehyde 3-phosphate + L-tryptophan + H2O. Its pathway is amino-acid biosynthesis; L-tryptophan biosynthesis; L-tryptophan from chorismate: step 5/5. The beta subunit is responsible for the synthesis of L-tryptophan from indole and L-serine. The protein is Tryptophan synthase beta chain of Salmonella choleraesuis (strain SC-B67).